We begin with the raw amino-acid sequence, 610 residues long: Diol dehydratase-reactivating factor large subunit (610 aa).

11–13 (NSS) lines the ATP pocket. Thr-105, Asp-166, and Asp-183 together coordinate Mg(2+). ATP contacts are provided by residues 459 to 462 (EEIK), 557 to 558 (GS), and Arg-591.

The protein belongs to the DdrA/PduG family. As to quaternary structure, component of the DDR complex, a heterotetramer of DdrA(2)/DdrB(2). The DDR complex interacts with the diol dehydratase complex in the presence of ADP but not ATP. Mg(2+) serves as cofactor.

It carries out the reaction ATP + H2O = ADP + phosphate + H(+). Its function is as follows. Large subunit of the diol dehydratase-reactivating factor (DDR), which reactivates suicidally inhibited adenosylcobalamin-dependent diol dehydratase (DD, pddA, pddB, pddC). DDR acts as a chaperone, reactivating inactivated DD holoenzyme in the presence of ATP, Mg(2+) and free adenosylcobalamin (AdoCbl), by mediating the exchange of the tightly bound damaged cofactor AdoCbl for a free intact one. Reactivation takes place in two steps: ADP-dependent cobalamin release, then ATP-dependent dissociation of the DD apoenzyme-DDR complex. DDR has weak ATPase activity which is required for DD reactivation. This subunit contains the adenosine nucleotide binding site. Activates glycerol-inactivated, O2-inactivated holoenzyme and inactivated enzyme-cyanocobalamin complex. Also reactivates glycerol-inactivated hologlycerol dehydratase, a DD isozyme. The protein is Diol dehydratase-reactivating factor large subunit of Klebsiella michiganensis (strain ATCC 8724 / DSM 4798 / JCM 20051 / NBRC 3318 / NRRL B-199 / KCTC 1686 / BUCSAV 143 / CCM 1901).